The chain runs to 285 residues: Diphthine methyl ester synthase (285 aa).

S-adenosyl-L-methionine contacts are provided by residues leucine 9, aspartate 84, glycine 87, 112–113 (SI), and leucine 163. Serine 171 is subject to Phosphoserine. Valine 225 and histidine 250 together coordinate S-adenosyl-L-methionine.

This sequence belongs to the diphthine synthase family.

It carries out the reaction 2-[(3S)-amino-3-carboxypropyl]-L-histidyl-[translation elongation factor 2] + 4 S-adenosyl-L-methionine = diphthine methyl ester-[translation elongation factor 2] + 4 S-adenosyl-L-homocysteine + 3 H(+). The protein operates within protein modification; peptidyl-diphthamide biosynthesis. S-adenosyl-L-methionine-dependent methyltransferase that catalyzes four methylations of the modified target histidine residue in translation elongation factor 2 (EF-2), to form an intermediate called diphthine methyl ester. The four successive methylation reactions represent the second step of diphthamide biosynthesis. The chain is Diphthine methyl ester synthase (DPH5) from Bos taurus (Bovine).